Consider the following 174-residue polypeptide: Transcriptional repressor NrdR (174 aa).

The segment at 3-34 (CPFCQHNDTRVIDSRVSEDGTTIRRRRECEAC) is a zinc-finger region. Residues 49-139 (PTVVKSDGGR…VYRSFQDVAD (91 aa)) enclose the ATP-cone domain.

Belongs to the NrdR family. Requires Zn(2+) as cofactor.

Its function is as follows. Negatively regulates transcription of bacterial ribonucleotide reductase nrd genes and operons by binding to NrdR-boxes. This Xanthomonas axonopodis pv. citri (strain 306) protein is Transcriptional repressor NrdR.